The sequence spans 295 residues: Acetylglutamate kinase (295 aa).

Residues 66–67 (GG), arginine 88, and asparagine 193 contribute to the substrate site.

It belongs to the acetylglutamate kinase family. ArgB subfamily.

Its subcellular location is the cytoplasm. The catalysed reaction is N-acetyl-L-glutamate + ATP = N-acetyl-L-glutamyl 5-phosphate + ADP. The protein operates within amino-acid biosynthesis; L-arginine biosynthesis; N(2)-acetyl-L-ornithine from L-glutamate: step 2/4. Its function is as follows. Catalyzes the ATP-dependent phosphorylation of N-acetyl-L-glutamate. This is Acetylglutamate kinase from Rhizobium leguminosarum bv. trifolii (strain WSM2304).